Here is a 729-residue protein sequence, read N- to C-terminus: Solute carrier family 15 member 2 (729 aa).

Residues 1 to 35 (MNPFQKNESKETLFSPVSTEEMLPRPPSPPKKSPP) are disordered. The Cytoplasmic portion of the chain corresponds to 1–57 (MNPFQKNESKETLFSPVSTEEMLPRPPSPPKKSPPKIFGSSYPVSIAFIVVNEFCER). Position 9 is a phosphoserine (Ser9). Thr12 carries the phosphothreonine modification. Ser28 is modified (phosphoserine). Residues 58–78 (FSYYGMKAVLTLYFLYFLHWN) form a helical membrane-spanning segment. Over 79-87 (EDTSTSVYH) the chain is Extracellular. Residues 88–108 (AFSSLCYFTPILGAAIADSWL) form a helical membrane-spanning segment. The Cytoplasmic portion of the chain corresponds to 109–113 (GKFKT). The helical transmembrane segment at 114–134 (IIYLSLVYVLGHVFKSLGAIP) threads the bilayer. The Extracellular segment spans residues 135-139 (ILGGK). The chain crosses the membrane as a helical span at residues 140–160 (MLHTILSLVGLSLIALGTGGI). The Cytoplasmic portion of the chain corresponds to 161-183 (KPCVAAFGGDQFEEEHAEARTRY). Residues 184-204 (FSVFYLAINAGSLISTFITPM) traverse the membrane as a helical segment. The Extracellular portion of the chain corresponds to 205–217 (LRGDVKCFGQDCY). The chain crosses the membrane as a helical span at residues 218–238 (ALAFGVPGLLMVLALVVFAMG). At 239–295 (SKMYRKPPPEGNIVAQVIKCIWFALCNRFRNRSGDLPKRQHWLDWAAEKYPKHLIAD) the chain is on the cytoplasmic side. The helical transmembrane segment at 296–316 (VKALTRVLFLYIPLPMFWALL) threads the bilayer. Over 317–343 (DQQGSRWTLQANKMNGDLGFFVLQPDQ) the chain is Extracellular. A helical transmembrane segment spans residues 344-364 (MQVLNPFLVLIFIPLFDLVIY). Residues 365-380 (RLISKCRINFSSLRKM) lie on the Cytoplasmic side of the membrane. Residues 381–401 (AVGMILACLAFAVAALVETKI) form a helical membrane-spanning segment. The Extracellular segment spans residues 402 to 611 (NGMIHPQPAS…PVNKLSIAWQ (210 aa)). The interval 402–611 (NGMIHPQPAS…PVNKLSIAWQ (210 aa)) is extracellular domain (ECD). Residues Asn435, Asn448, Asn528, and Asn587 are each glycosylated (N-linked (GlcNAc...) asparagine). The chain crosses the membrane as a helical span at residues 612–632 (LPQYVLVTAAEVMFSVTGLEF). Over 633-643 (SYSQAPSSMKS) the chain is Cytoplasmic. Residues 644–664 (VLQAAWLLTVAVGNIIVLVVA) form a helical membrane-spanning segment. Over 665–674 (QFSGLAQWAE) the chain is Extracellular. A helical membrane pass occupies residues 675–695 (FVLFSCLLLVVCLIFSVMAYY). Residues 696-729 (YVPLKSEDTREATDKQIPAVQGNMINLETKNTRL) lie on the Cytoplasmic side of the membrane.

This sequence belongs to the major facilitator superfamily. Proton-dependent oligopeptide transporter (POT/PTR) (TC 2.A.17) family. In terms of assembly, interacts (via extracellular domain region) with trypsin. In terms of tissue distribution, strongly expressed in kidney cortex and medulla. Also detected in brain, lung and spleen. Expressed in choroid plexus.

It is found in the apical cell membrane. It localises to the cytoplasmic vesicle. The protein localises to the phagosome membrane. The protein resides in the cell membrane. It catalyses the reaction a dipeptide(out) + 2 H(+)(out) = a dipeptide(in) + 2 H(+)(in). It carries out the reaction glycyl-L-leucine(out) + 2 H(+)(out) = glycyl-L-leucine(in) + 2 H(+)(in). The enzyme catalyses glycyl-L-lysine(out) + 2 H(+)(out) = glycyl-L-lysine(in) + 2 H(+)(in). The catalysed reaction is glycyl-L-glutamate(out) + 3 H(+)(out) = glycyl-L-glutamate(in) + 3 H(+)(in). It catalyses the reaction L-alanyl-L-alanine(out) + 2 H(+)(out) = L-alanyl-L-alanine(in) + 2 H(+)(in). It carries out the reaction an L-amino acid tripeptide(out) + 2 H(+)(out) = an L-amino acid tripeptide(in) + 2 H(+)(in). The enzyme catalyses N-acetyl-D-muramoyl-L-alanyl-D-isoglutamine(out) + 3 H(+)(out) = N-acetyl-D-muramoyl-L-alanyl-D-isoglutamine(in) + 3 H(+)(in). The catalysed reaction is carnosine(out) + 2 H(+)(out) = carnosine(in) + 2 H(+)(in). In terms of biological role, proton-coupled amino-acid transporter that transports oligopeptides of 2 to 4 amino acids with a preference for dipeptides. Transports neutral and anionic dipeptides with a proton to peptide stoichiometry of 2:1 or 3:1. In kidney, involved in the absorption of circulating di- and tripeptides from the glomerular filtrate. Can also transport beta-lactam antibiotics, such as the aminocephalosporin cefadroxil, and other antiviral and anticancer drugs. Transports the dipeptide-like aminopeptidase inhibitor bestatin. Also able to transport carnosine. Involved in innate immunity by promoting the detection of microbial pathogens by NOD-like receptors (NLRs). Mediates transport of bacterial peptidoglycans across the plasma membrane or, in macrophages, the phagosome membrane: catalyzes the transport of certain bacterial peptidoglycans, such as muramyl dipeptide (MDP), the NOD2 ligand. This Rattus norvegicus (Rat) protein is Solute carrier family 15 member 2.